The following is a 115-amino-acid chain: Double-headed protease inhibitor, submandibular gland (115 aa).

Kazal-like domains are found at residues 6 to 66 (IGRE…ACDI) and 67 to 115 (ECTE…HGEC). Disulfide bonds link C12/C46, C24/C43, C32/C64, C68/C97, C75/C94, and C83/C115.

The protein localises to the secreted. Its function is as follows. This inhibitor is composed of two homologous actively inhibiting halves: one which inhibits trypsin, the other which inhibits elastase. The chain is Double-headed protease inhibitor, submandibular gland from Vulpes vulpes (Red fox).